Reading from the N-terminus, the 283-residue chain is N-terminal Xaa-Pro-Lys N-methyltransferase 2 (283 aa).

S-adenosyl-L-methionine is bound by residues Gly124, Arg129, Asp146, 174–175 (LQ), Gln190, and His195.

This sequence belongs to the methyltransferase superfamily. NTM1 family.

It is found in the nucleus. It carries out the reaction N-terminal L-alanyl-L-prolyl-L-lysyl-[protein] + S-adenosyl-L-methionine = N-terminal N-methyl-L-alanyl-L-prolyl-L-lysyl-[protein] + S-adenosyl-L-homocysteine + H(+). It catalyses the reaction N-terminal L-prolyl-L-prolyl-L-lysyl-[protein] + S-adenosyl-L-methionine = N-terminal N-methyl-L-prolyl-L-prolyl-L-lysyl-[protein] + S-adenosyl-L-homocysteine + H(+). The enzyme catalyses N-terminal L-seryl-L-prolyl-L-lysyl-[protein] + S-adenosyl-L-methionine = N-terminal N-methyl-L-seryl-L-prolyl-L-lysyl-[protein] + S-adenosyl-L-homocysteine + H(+). In terms of biological role, alpha N-methyltransferase that methylates the N-terminus of target proteins containing the N-terminal motif [Ala/Pro/Ser]-Pro-Lys when the initiator Met is cleaved. Specifically catalyzes monomethylation of exposed alpha-amino group of Ala or Ser residue in the [Ala/Ser]-Pro-Lys motif and Pro in the Pro-Pro-Lys motif. Predominantly functions as a mono-methyltransferase but is also able to di-/tri-methylate the GPKRIA peptide and di-methylate the PPKRIA peptide (in vitro). May activate NTMT1 by priming its substrates for trimethylation. This chain is N-terminal Xaa-Pro-Lys N-methyltransferase 2, found in Homo sapiens (Human).